A 218-amino-acid chain; its full sequence is Uracil-DNA glycosylase (218 aa).

The protein belongs to the uracil-DNA glycosylase (UDG) superfamily. UNG family. In terms of assembly, homodimer. Interacts with protein OPG148. Component of the Uracil-DNA glycosylase(UDG)-OPG148-polymerase complex; OPG148 and UDG form a heterodimeric processivity factor that associates with OPG71 to form the processive polymerase holoenzyme.

It carries out the reaction Hydrolyzes single-stranded DNA or mismatched double-stranded DNA and polynucleotides, releasing free uracil.. Plays an essential role in viral replication as a component of the DNA polymerase processivity factor. Excises uracil residues from the DNA which can arise as a result of misincorporation of dUMP residues by DNA polymerase or due to deamination of cytosine. This Monkeypox virus protein is Uracil-DNA glycosylase (OPG116).